A 271-amino-acid chain; its full sequence is MASENMTPQDYIGHHLTNLQMDLRTFSLVDPHNPPATFWTLNIDSMFFSVVLGLLFLAMFRSVAKKATSGVPGKFQTAIELVIGFVHGSVKDMYHGKSKLIAPLALTVFVWVFLMNLMDLLPIDLLPYIGEHVFGLPALRVVPSADVNITLSMALGVFILILFYSIKMKGVSGFVKELTLQPFNHWAFIPVNLILEGVSLLSKPVSLGLRLFGNMYAGELIFILIAGLLPWWSQWILNVPWAIFHILIITLQAFIFMVLTIVYLSMASEEH.

Helical transmembrane passes span 38–58, 100–120, 146–166, 220–240, and 242–262; these read FWTLNIDSMFFSVVLGLLFLA, LIAPLALTVFVWVFLMNLMDL, DVNITLSMALGVFILILFYSI, LIFILIAGLLPWWSQWILNVP, and AIFHILIITLQAFIFMVLTIV.

This sequence belongs to the ATPase A chain family. In terms of assembly, F-type ATPases have 2 components, CF(1) - the catalytic core - and CF(0) - the membrane proton channel. CF(1) has five subunits: alpha(3), beta(3), gamma(1), delta(1), epsilon(1). CF(0) has three main subunits: a(1), b(2) and c(9-12). The alpha and beta chains form an alternating ring which encloses part of the gamma chain. CF(1) is attached to CF(0) by a central stalk formed by the gamma and epsilon chains, while a peripheral stalk is formed by the delta and b chains.

It localises to the cell inner membrane. Its function is as follows. Key component of the proton channel; it plays a direct role in the translocation of protons across the membrane. This is ATP synthase subunit a from Enterobacter sp. (strain 638).